We begin with the raw amino-acid sequence, 875 residues long: Cell surface glycoprotein (875 aa).

Positions 1-23 are cleaved as a signal peptide; sequence MTNTKQKINAVFLSALMVMSVFA. Residues 137–157 are compositionally biased toward polar residues; it reads EVQNGGSGDVTGSTLQTSSSG. Disordered regions lie at residues 137 to 158 and 197 to 217; these read EVQNGGSGDVTGSTLQTSSSGP and LPTADRNNDNGASGSNGDFDV. Residues 205-216 show a composition bias toward low complexity; it reads DNGASGSNGDFD. Asn253 is a glycosylation site (N-linked (GlcNAc...) asparagine). Positions 380–414 are disordered; the sequence is YPASDSSNDGYASGGSHASSVTVRDTDGDGTDDSE. Over residues 383-402 the composition is skewed to polar residues; the sequence is SDSSNDGYASGGSHASSVTV. Asn455, Asn563, Asn715, and Asn774 each carry an N-linked (GlcNAc...) asparagine glycan. The interval 794–852 is disordered; it reads EAGSLEEEQPDTETPEPDTETPEPDTETPEPDTETPEPDTETPEPDTETEEATTEASGP. Residues 797–846 are compositionally biased toward acidic residues; that stretch reads SLEEEQPDTETPEPDTETPEPDTETPEPDTETPEPDTETPEPDTETEEAT. Residues 851-875 form a helical membrane-spanning segment; the sequence is GPGFTAAIALIALVAAALLAVRRDN. Residues 852-854 carry the PGF sorting signal motif; it reads PGF.

Belongs to the halobacterial S-layer protein family. Asn-455 is glycosylated by a pentasaccharide comprising a hexose, 2 hexuronic acids, a methyl ester of a hexuronic acid and a final hexose. The complete pentasaccharide is first assembled on dolichol phosphate and then transferred the glycan to the target Asn. In terms of processing, cleaved by the archaeosortase ArtA at the C-terminus, with removal of a short hydrophobic segment. Post-translationally, lipidation.

It localises to the secreted. Its subcellular location is the cell wall. It is found in the S-layer. The protein localises to the cell membrane. In terms of biological role, S-layer protein. The S-layer is a paracrystalline mono-layered assembly of proteins which coat the surface of the cell. This Haloarcula marismortui (strain ATCC 43049 / DSM 3752 / JCM 8966 / VKM B-1809) (Halobacterium marismortui) protein is Cell surface glycoprotein (csg1).